The sequence spans 108 residues: UPF0060 membrane protein RSKD131_0092 (108 aa).

4 helical membrane passes run 5–25 (LAAY…VWAW), 32–52 (ALWL…LALT), 62–82 (AVYG…VEGV), and 86–106 (RWDM…LWAP).

The protein belongs to the UPF0060 family.

It is found in the cell inner membrane. This Cereibacter sphaeroides (strain KD131 / KCTC 12085) (Rhodobacter sphaeroides) protein is UPF0060 membrane protein RSKD131_0092.